Reading from the N-terminus, the 335-residue chain is S-adenosylmethionine:tRNA ribosyltransferase-isomerase (335 aa).

The protein belongs to the QueA family. As to quaternary structure, monomer.

The protein localises to the cytoplasm. It carries out the reaction 7-aminomethyl-7-carbaguanosine(34) in tRNA + S-adenosyl-L-methionine = epoxyqueuosine(34) in tRNA + adenine + L-methionine + 2 H(+). Its pathway is tRNA modification; tRNA-queuosine biosynthesis. In terms of biological role, transfers and isomerizes the ribose moiety from AdoMet to the 7-aminomethyl group of 7-deazaguanine (preQ1-tRNA) to give epoxyqueuosine (oQ-tRNA). The sequence is that of S-adenosylmethionine:tRNA ribosyltransferase-isomerase from Thermotoga petrophila (strain ATCC BAA-488 / DSM 13995 / JCM 10881 / RKU-1).